The primary structure comprises 672 residues: COBRA-like protein 10 (672 aa).

The signal sequence occupies residues 1 to 35 (MRAIDVKTGMKIPWDVRYSLSLFIFLSSILFLSNG). N-linked (GlcNAc...) asparagine glycosylation is found at Asn-79, Asn-135, Asn-264, Asn-328, Asn-339, Asn-368, Asn-422, Asn-442, Asn-483, Asn-562, Asn-570, and Asn-589. The region spanning 502 to 607 (KLPCPDNCGV…PVPGKQQSVI (106 aa)) is the CBM2 domain. Ser-646 carries GPI-anchor amidated serine lipidation. A propeptide spans 647 to 672 (SGHRRGISVSMSFVFATIAAFALMMD) (removed in mature form). The Required for processing by the PIG complex, a critical step for apical plasma membrane localization in pollen tubes motif lies at 664–672 (IAAFALMMD).

It belongs to the COBRA family. The GPI-anchor attachment at Ser-646 requires APTG1. Expressed in roots, stems, leaves, flowers and siliques. Specific expression in the pollen tube.

Its subcellular location is the cell membrane. The protein resides in the cytoplasm. It localises to the vesicle. Involved in the deposition of apical pectin cap and cellulose microfibrils in pollen tubes. Not essential for pollen development, hydration or germination, but required for pollen tubes growth in the female transmitting tract of pistil and toward micropyles, via the perception of ovule guidance cues. In Arabidopsis thaliana (Mouse-ear cress), this protein is COBRA-like protein 10.